A 582-amino-acid chain; its full sequence is NudC domain-containing protein 1 (582 aa).

Ser7 carries the post-translational modification Phosphoserine. Positions 272-360 (KVEPLYYWQQ…NEGLMWPELV (89 aa)) constitute a CS domain. The residue at position 387 (Ser387) is a Phosphoserine.

It localises to the cytoplasm. It is found in the nucleus. In Mus musculus (Mouse), this protein is NudC domain-containing protein 1.